A 582-amino-acid chain; its full sequence is Choline kinase (582 aa).

The segment at 1 to 36 (MVQESRPGSVRSYSVGYQARSRSSSQRRHSLTRQRS) is disordered. At Ser-30 the chain carries Phosphoserine; by PKA. Phosphoserine occurs at positions 48 and 51. At Thr-54 the chain carries Phosphothreonine. Ser-85 carries the phosphoserine; by PKA modification.

This sequence belongs to the choline/ethanolamine kinase family. Monomer. Interacts with NAP1. Requires Mg(2+) as cofactor.

It localises to the cytoplasm. It catalyses the reaction choline + ATP = phosphocholine + ADP + H(+). It carries out the reaction ethanolamine + ATP = phosphoethanolamine + ADP + H(+). The protein operates within phospholipid metabolism; phosphatidylcholine biosynthesis; phosphocholine from choline: step 1/1. Catalyzes the committed step in the synthesis of phosphatidylcholine by the CDP-choline pathway. Also exhibits ethanolamine kinase activity but it is a poor substrate at 14% efficiency compared with choline. This Saccharomyces cerevisiae (strain ATCC 204508 / S288c) (Baker's yeast) protein is Choline kinase.